The following is a 1305-amino-acid chain: Nonribosomal peptide synthetase hkm11 (1305 aa).

The interval 278 to 672 (TYGELDRWAK…GEIEHHLRPK (395 aa)) is adenylation. In terms of domain architecture, Carrier spans 788-864 (APTTEQEALL…SLASRMRQYN (77 aa)). At Ser-825 the chain carries O-(pantetheine 4'-phosphoryl)serine. A condensation region spans residues 926–1166 (KGQLDRHQLQ…LCLNITAVRV (241 aa)).

It belongs to the NRP synthetase family.

The catalysed reaction is hancockiamide D + (E)-cinnamate + ATP = hancockiamide A + AMP + diphosphate. It carries out the reaction hancockiamide H + (E)-cinnamate + ATP = hancockiamide G + AMP + diphosphate. Its pathway is secondary metabolite biosynthesis. Its function is as follows. Nonribosomal peptide synthetase; part of the gene cluster that mediates the biosynthesis of hancockiamides, an unusual new family of N-cinnamoylated piperazines. The NRPS hkm10 and the NmrA-like reductase hkm9 are proposed to convert two molecules of L-Phe to the intermediary piperazine called xenocockiamide A. Xenocockiamide A is then converted to hancockiamide D via a series of hydroxylations and O-methylations. The tyrosinase hkm6 may catalyze an aromatic hydroxylation, then the 2-oxoglutarate-dependent Fe(II) dioxygenase hkm4 and the FAD-dependent phenol hydroxylase hkm7 may catalyze consecutive hydroxylations to install 2 more hydroxy groups, and the methyltransferase hkm8 probably catalyzes two methylations using 2 molecules of S-adenosyl-L-methionine (SAM). The NRPS hkm11 activates and transfers trans-cinnamate supplied by the PAL hkm12 to hancockiamide D and produces hancockiamide A. NRPS Hkm11 has the flexibility to tolerate the bulky hancockiamide G as a substrate and the absence of the acetyl-transferase hkm3 opens up the opportunity for hkm11 to introduce a second N-cinnamoyl moiety. The cytochrome P450 monooxygenase hkm5 catalyzes the methylenedioxy bridge formation, converting hancockiamide A into hancockiamide G. Hkm5 can also convert hancockiamide B into hancockiamide C, and hancockiamide D into hancockiamide H. The N-acetyltransferase hkm3 finally transfers an acetyl group to 1-N of piperazine, converting hancockiamide A into hancockiamide B and hancockiamide G into hancockiamide C. The protein is Nonribosomal peptide synthetase hkm11 of Aspergillus hancockii.